A 577-amino-acid polypeptide reads, in one-letter code: Proline--tRNA ligase (577 aa).

It belongs to the class-II aminoacyl-tRNA synthetase family. ProS type 1 subfamily. In terms of assembly, homodimer.

It is found in the cytoplasm. It catalyses the reaction tRNA(Pro) + L-proline + ATP = L-prolyl-tRNA(Pro) + AMP + diphosphate. In terms of biological role, catalyzes the attachment of proline to tRNA(Pro) in a two-step reaction: proline is first activated by ATP to form Pro-AMP and then transferred to the acceptor end of tRNA(Pro). As ProRS can inadvertently accommodate and process non-cognate amino acids such as alanine and cysteine, to avoid such errors it has two additional distinct editing activities against alanine. One activity is designated as 'pretransfer' editing and involves the tRNA(Pro)-independent hydrolysis of activated Ala-AMP. The other activity is designated 'posttransfer' editing and involves deacylation of mischarged Ala-tRNA(Pro). The misacylated Cys-tRNA(Pro) is not edited by ProRS. The polypeptide is Proline--tRNA ligase (Thermotoga maritima (strain ATCC 43589 / DSM 3109 / JCM 10099 / NBRC 100826 / MSB8)).